Consider the following 77-residue polypeptide: Acyl carrier protein (77 aa).

Positions 2 to 77 (ADVLERVTKI…DAVTYIESHL (76 aa)) constitute a Carrier domain. Position 37 is an O-(pantetheine 4'-phosphoryl)serine (S37).

The protein belongs to the acyl carrier protein (ACP) family. Post-translationally, 4'-phosphopantetheine is transferred from CoA to a specific serine of apo-ACP by AcpS. This modification is essential for activity because fatty acids are bound in thioester linkage to the sulfhydryl of the prosthetic group.

Its subcellular location is the cytoplasm. Its pathway is lipid metabolism; fatty acid biosynthesis. In terms of biological role, carrier of the growing fatty acid chain in fatty acid biosynthesis. This is Acyl carrier protein from Bacillus mycoides (strain KBAB4) (Bacillus weihenstephanensis).